A 140-amino-acid polypeptide reads, in one-letter code: Arsenate reductase ArsI2 (140 aa).

Cys10 acts as the Nucleophile; cysteine thioarsenate intermediate in catalysis.

Belongs to the ArsC family.

It carries out the reaction [glutaredoxin]-dithiol + arsenate + glutathione + H(+) = glutathionyl-S-S-[glutaredoxin] + arsenite + H2O. Functionally, catalyzes the reduction of arsenate [As(V)] to arsenite [As(III)]. Does not constitute the major arsenate reductase in cells: essential only in the absence of ArsC (AC P74313). The sequence is that of Arsenate reductase ArsI2 from Synechocystis sp. (strain ATCC 27184 / PCC 6803 / Kazusa).